The following is a 238-amino-acid chain: uncharacterized protein (238 aa).

A run of 3 helical transmembrane segments spans residues 75–95 (YAIF…HNFY), 116–136 (IVLI…FSLI), and 172–192 (IQGL…LEVI). Positions 200–238 (DVEMSSMRGQAITTEPASDNTMAEETDCNTSKDVESGSN) are disordered. A compositionally biased stretch (polar residues) spans 206-220 (MRGQAITTEPASDNT). Positions 229 to 238 (TSKDVESGSN) are enriched in basic and acidic residues.

Its subcellular location is the membrane. This is an uncharacterized protein from Schizosaccharomyces pombe (strain 972 / ATCC 24843) (Fission yeast).